The chain runs to 238 residues: Sugar fermentation stimulation protein homolog (238 aa).

The protein belongs to the SfsA family.

This Pseudomonas entomophila (strain L48) protein is Sugar fermentation stimulation protein homolog.